A 180-amino-acid polypeptide reads, in one-letter code: Ribulose bisphosphate carboxylase small subunit, chloroplastic (180 aa).

The N-terminal 56 residues, 1–56, are a transit peptide targeting the chloroplast; that stretch reads MASSIMSSAAVATRSNGAQASMVAPFTGLKSNASFPVSRKTNLDITSIASNGGRVR.

It belongs to the RuBisCO small chain family. As to quaternary structure, heterohexadecamer of 8 large and 8 small subunits.

Its subcellular location is the plastid. It is found in the chloroplast. RuBisCO catalyzes two reactions: the carboxylation of D-ribulose 1,5-bisphosphate, the primary event in carbon dioxide fixation, as well as the oxidative fragmentation of the pentose substrate. Both reactions occur simultaneously and in competition at the same active site. Although the small subunit is not catalytic it is essential for maximal activity. This Stellaria longipes (Longstalk starwort) protein is Ribulose bisphosphate carboxylase small subunit, chloroplastic.